Here is a 341-residue protein sequence, read N- to C-terminus: HTH-type transcriptional repressor PurR (341 aa).

The 55-residue stretch at 2–56 (ATIKDVAKRANVSTTTVSHVINKTRFVAEETRNAVWAAIKELHYSPSAVARSLKV) folds into the HTH lacI-type domain. A DNA-binding region (H-T-H motif) is located at residues 4–23 (IKDVAKRANVSTTTVSHVIN). Residues 48 to 56 (SAVARSLKV) mediate DNA binding. Hypoxanthine contacts are provided by Tyr-73, Arg-190, Thr-192, Phe-221, and Asp-275.

Homodimer.

It participates in purine metabolism; purine nucleotide biosynthesis [regulation]. Functionally, is the main repressor of the genes involved in the de novo synthesis of purine nucleotides, regulating purB, purC, purEK, purF, purHD, purL, purMN and guaBA expression. PurR is allosterically activated to bind its cognate DNA by binding the purine corepressors, hypoxanthine or guanine, thereby effecting transcription repression. This is HTH-type transcriptional repressor PurR from Salmonella arizonae (strain ATCC BAA-731 / CDC346-86 / RSK2980).